We begin with the raw amino-acid sequence, 521 residues long: MQFSSVLPLEGKACMSPVRRGSGGYGSERMRINCCSIRRNKALRRMCFSARGAVSSTQCVLTSDAGPDTLVRPNHPFRRNYADPNEVAAVILGGGTGTQLFPLTSTRATPAVPIGGCYRLIDIPMSNCFNSGINKIFVMTQFNSASLNRHIHRTYLGGGINFTDGSVEVLAATQMPGEAAGWFQGTADAVRKFIWVLEDYYKHKAIEHILILSGDQLYRMDYMELVQKHVDDNADITLSCAPVGESRASDYGLVKFDSSGRVIQFSEKPKGAALEEMKVDTSFLNFATCTLPAEYPYIASMGVYVFKRDVLLDLLKSRYAELHDFGSEILPKALHEHNVQAYVFTDYWEDIGTIRSFFDANMALCEQPPKFEFYDPKTPFFTSPRYLPPTKSDKCRIKDAIISHGCFLRECAIEHSIVGVPSRLNSGCELKNTMMMGADLYETEDEISRLLAEGKVPIGVGENTKISNCIIDMNCQGWKERLHNKQRGRSKSPDRPGRRILIRSGIVVVLKNATIKDGTVI.

A chloroplast-targeting transit peptide spans Met-1–Cys-47.

It belongs to the bacterial/plant glucose-1-phosphate adenylyltransferase family. As to quaternary structure, heterotetramer. In terms of tissue distribution, abundant in the embryo and is also present in the endosperm.

Its subcellular location is the plastid. It is found in the chloroplast. The protein localises to the amyloplast. The enzyme catalyses alpha-D-glucose 1-phosphate + ATP + H(+) = ADP-alpha-D-glucose + diphosphate. It participates in glycan biosynthesis; starch biosynthesis. With respect to regulation, activated by 3'phosphoglycerate, inhibited by orthophosphate. Allosteric regulation. In terms of biological role, this protein plays a role in synthesis of starch. It catalyzes the synthesis of the activated glycosyl donor, ADP-glucose from Glc-1-P and ATP. The chain is Glucose-1-phosphate adenylyltransferase large subunit 2, chloroplastic/amyloplastic (AGP2) from Zea mays (Maize).